Here is a 592-residue protein sequence, read N- to C-terminus: Aspartate--tRNA(Asp/Asn) ligase (592 aa).

E172 contacts L-aspartate. An aspartate region spans residues 196–199; that stretch reads QLFK. Residue R218 coordinates L-aspartate. ATP is bound by residues 218–220 and Q227; that span reads RDE. H442 lines the L-aspartate pocket. Position 476 (E476) interacts with ATP. Residue R483 coordinates L-aspartate. 528 to 531 lines the ATP pocket; sequence GWDR. The disordered stretch occupies residues 553–592; it reads SGTDPLTGAPTPITPEQRKEAGIDADPYAAAGRPPGRQSA.

It belongs to the class-II aminoacyl-tRNA synthetase family. Type 1 subfamily. As to quaternary structure, homodimer.

It localises to the cytoplasm. The enzyme catalyses tRNA(Asx) + L-aspartate + ATP = L-aspartyl-tRNA(Asx) + AMP + diphosphate. Functionally, aspartyl-tRNA synthetase with relaxed tRNA specificity since it is able to aspartylate not only its cognate tRNA(Asp) but also tRNA(Asn). Reaction proceeds in two steps: L-aspartate is first activated by ATP to form Asp-AMP and then transferred to the acceptor end of tRNA(Asp/Asn). The sequence is that of Aspartate--tRNA(Asp/Asn) ligase from Acidothermus cellulolyticus (strain ATCC 43068 / DSM 8971 / 11B).